The primary structure comprises 219 residues: Octanoyltransferase (219 aa).

The BPL/LPL catalytic domain maps to 24–212 (KFRRECILFL…NLNSFLGPIS (189 aa)). Residues 69 to 76 (RGGDFTAH), 140 to 142 (SIG), and 153 to 155 (GVA) contribute to the substrate site. Cys-171 (acyl-thioester intermediate) is an active-site residue.

The protein belongs to the LipB family.

The protein resides in the cytoplasm. It carries out the reaction octanoyl-[ACP] + L-lysyl-[protein] = N(6)-octanoyl-L-lysyl-[protein] + holo-[ACP] + H(+). Its pathway is protein modification; protein lipoylation via endogenous pathway; protein N(6)-(lipoyl)lysine from octanoyl-[acyl-carrier-protein]: step 1/2. Functionally, catalyzes the transfer of endogenously produced octanoic acid from octanoyl-acyl-carrier-protein onto the lipoyl domains of lipoate-dependent enzymes. Lipoyl-ACP can also act as a substrate although octanoyl-ACP is likely to be the physiological substrate. This is Octanoyltransferase from Leptospira borgpetersenii serovar Hardjo-bovis (strain JB197).